The primary structure comprises 654 residues: RNA polymerase I-specific transcription initiation factor tif-1A (654 aa).

Residues 1 to 37 are disordered; sequence MKRSTANAPKLSPKHESESDPKKVKLEEEAKPTVNQA. Residues 13 to 31 show a composition bias toward basic and acidic residues; that stretch reads PKHESESDPKKVKLEEEAK.

Belongs to the RRN3 family.

It localises to the nucleus. The protein resides in the nucleolus. Its function is as follows. Required for efficient transcription initiation by RNA polymerase I (Pol I). This chain is RNA polymerase I-specific transcription initiation factor tif-1A, found in Caenorhabditis elegans.